Reading from the N-terminus, the 109-residue chain is MVWKRTISAKALEKAKSAAVKVEDKVVFIANIKGTLYAMDAVCSHARCILDQLDEEKLTVKCYCHQALFDLRSGKMLEPPYVAPDAPKEKLGLKTYQIRDNGGWIEVDV.

The 105-residue stretch at 3–107 (WKRTISAKAL…IRDNGGWIEV (105 aa)) folds into the Rieske domain. Positions 43, 45, 62, and 65 each coordinate [2Fe-2S] cluster.

It belongs to the SDX family. It depends on [2Fe-2S] cluster as a cofactor.

The protein resides in the cytoplasm. The polypeptide is Probable sulredoxin (sdx) (Saccharolobus solfataricus (strain ATCC 35092 / DSM 1617 / JCM 11322 / P2) (Sulfolobus solfataricus)).